A 128-amino-acid polypeptide reads, in one-letter code: Small ribosomal subunit protein uS9 (128 aa).

A disordered region spans residues 105-128 (DPRSVERKKPGQPKARRRFQFSKR). Over residues 114 to 128 (PGQPKARRRFQFSKR) the composition is skewed to basic residues.

Belongs to the universal ribosomal protein uS9 family.

The protein is Small ribosomal subunit protein uS9 of Bacteroides thetaiotaomicron (strain ATCC 29148 / DSM 2079 / JCM 5827 / CCUG 10774 / NCTC 10582 / VPI-5482 / E50).